The sequence spans 34 residues: Putative protein YmiB (34 aa).

A helical transmembrane segment spans residues 7-24 (TAAKRIVFFIYLFVIQFW).

The protein resides in the membrane. In Escherichia coli (strain K12), this protein is Putative protein YmiB (ymiB).